We begin with the raw amino-acid sequence, 249 residues long: 3-deoxy-D-manno-octulosonic acid kinase (249 aa).

The active site involves Asp-175.

It belongs to the protein kinase superfamily. KdkA/RfaP family.

The protein localises to the cell inner membrane. The enzyme catalyses an alpha-Kdo-(2-&gt;6)-lipid IVA + ATP = a 4-O-phospho-alpha-Kdo-(2-&gt;6)-lipid IVA + ADP + H(+). Its pathway is bacterial outer membrane biogenesis; LPS core biosynthesis. Its function is as follows. Catalyzes the ATP-dependent phosphorylation of the 3-deoxy-D-manno-octulosonic acid (Kdo) residue in Kdo-lipid IV(A) at the 4-OH position. The protein is 3-deoxy-D-manno-octulosonic acid kinase of Xanthomonas campestris pv. campestris (strain 8004).